Here is a 200-residue protein sequence, read N- to C-terminus: 3-isopropylmalate dehydratase small subunit 2 (200 aa).

The protein belongs to the LeuD family. LeuD type 1 subfamily. Heterodimer of LeuC and LeuD.

The enzyme catalyses (2R,3S)-3-isopropylmalate = (2S)-2-isopropylmalate. It participates in amino-acid biosynthesis; L-leucine biosynthesis; L-leucine from 3-methyl-2-oxobutanoate: step 2/4. In terms of biological role, catalyzes the isomerization between 2-isopropylmalate and 3-isopropylmalate, via the formation of 2-isopropylmaleate. The chain is 3-isopropylmalate dehydratase small subunit 2 from Mannheimia succiniciproducens (strain KCTC 0769BP / MBEL55E).